The primary structure comprises 989 residues: DNA-binding protein SMUBP-2 (989 aa).

Residue Ala-2 is modified to N-acetylalanine. ATP-binding positions include Gly-213 to Thr-220, Gln-402, Tyr-441, and Glu-570. The tract at residues Thr-637–Lys-783 is SS DNA-binding. Disordered regions lie at residues Tyr-650–Arg-717, Leu-765–His-818, and Leu-833–Pro-869. The span at Glu-677–Gln-690 shows a compositional bias: low complexity. Residues Ile-721–Ser-784 enclose the R3H domain. Basic and acidic residues predominate over residues Leu-765 to Ala-775. 2 positions are modified to phosphoserine: Ser-797 and Ser-800. Residues Leu-833–Gln-842 are compositionally biased toward low complexity. The short motif at Lys-860 to Lys-864 is the Nuclear localization signal element. The AN1-type zinc finger occupies Ile-885 to Ala-934. 8 residues coordinate Zn(2+): Cys-891, Cys-896, Cys-907, Cys-910, Cys-915, His-918, His-924, and Cys-926. Residues Ala-954–Gly-972 are compositionally biased toward basic and acidic residues. The disordered stretch occupies residues Ala-954 to Thr-989.

Belongs to the DNA2/NAM7 helicase family. As to quaternary structure, homooligomer. Interacts with RUVBL1. Interacts with RUVBL2. Interacts with GTF3C1. Interacts with ABT1. Interacts with ribosomes. In terms of tissue distribution, high expression in brain and testis, moderate in heart, spleen, and kidney, and low in other tissues.

It localises to the nucleus. The protein localises to the cytoplasm. Its subcellular location is the cell projection. The protein resides in the axon. It carries out the reaction ATP + H2O = ADP + phosphate + H(+). In terms of biological role, 5' to 3' helicase that unwinds RNA and DNA duplexes in an ATP-dependent reaction. Specific to 5'-phosphorylated single-stranded guanine-rich sequences. May play a role in RNA metabolism, ribosome biogenesis or initiation of translation. May play a role in regulation of transcription. Interacts with tRNA-Tyr. This Mesocricetus auratus (Golden hamster) protein is DNA-binding protein SMUBP-2 (IGHMBP2).